Here is a 495-residue protein sequence, read N- to C-terminus: Autoinducer 2 import ATP-binding protein LsrA (495 aa).

ABC transporter domains lie at 5–233 and 256–494; these read IEAH…TPVS and AQDF…FGGQ. 37 to 44 is a binding site for ATP; that stretch reads GGNGAGKS.

This sequence belongs to the ABC transporter superfamily. AI-2 autoinducer porter (TC 3.A.1.2.8) family. In terms of assembly, the complex is composed of two ATP-binding proteins (LsrA), two transmembrane proteins (LsrC and LsrD) and a solute-binding protein (LsrB).

It is found in the cell inner membrane. The enzyme catalyses ATP + H2O + (2R,4S)-2-methyl-2,3,3,4-tetrahydroxytetrahydrofuran-[AI-2-binding protein]Side 1 = ADP + phosphate + (2R,4S)-2-methyl-2,3,3,4-tetrahydroxytetrahydrofuranSide 2 + [AI-2-binding protein]Side 1.. Its function is as follows. Part of the ABC transporter complex LsrABCD involved in autoinducer 2 (AI-2) import. Responsible for energy coupling to the transport system. The polypeptide is Autoinducer 2 import ATP-binding protein LsrA (lsrA) (Enterobacter sp. (strain 638)).